The chain runs to 474 residues: Phenolic acid decarboxylase (474 aa).

Mn(2+)-binding residues include N161, H182, and E224. Prenylated FMN is bound by residues 161 to 166 and 181 to 182; these read NVGTYR and MH. The active-site Proton donor is the E273.

It belongs to the UbiD family. YclC subfamily. Prenylated FMN is required as a cofactor. Requires Mn(2+) as cofactor.

The enzyme catalyses vanillate + H(+) = guaiacol + CO2. Its function is as follows. Involved in the non-oxidative decarboxylation and detoxification of phenolic derivatives under both aerobic and anaerobic conditions. Phenolic acid decarboxylase that catalyzes the reversible decarboxylation of vanillate. This chain is Phenolic acid decarboxylase, found in Streptomyces sp. (strain D7).